Here is a 458-residue protein sequence, read N- to C-terminus: Dihydrolipoyllysine-residue acetyltransferase component of pyruvate dehydrogenase complex, mitochondrial (458 aa).

Residues 1-28 constitute a mitochondrion transit peptide; sequence MIVPVLSRQALRHASVARVALPSLTRWY. The Lipoyl-binding domain occupies 34-110; sequence HTVVKMPALS…AVGNPIAILV (77 aa). Lysine 75 carries the post-translational modification N6-lipoyllysine. The disordered stretch occupies residues 126–164; sequence DAGGETSPAVPKDEPKNESTASAPTPAPTPAPEPENTSF. The 38-residue stretch at 177–214 folds into the Peripheral subunit-binding (PSBD) domain; it reads NALPAAKRLAREKGIDLRNVKGSGPGGKITEEDVKKAL. Residues histidine 431 and aspartate 435 contribute to the active site.

This sequence belongs to the 2-oxoacid dehydrogenase family. The cofactor is (R)-lipoate.

The protein resides in the mitochondrion matrix. It carries out the reaction N(6)-[(R)-dihydrolipoyl]-L-lysyl-[protein] + acetyl-CoA = N(6)-[(R)-S(8)-acetyldihydrolipoyl]-L-lysyl-[protein] + CoA. In terms of biological role, the pyruvate dehydrogenase complex catalyzes the overall conversion of pyruvate to acetyl-CoA and CO(2). It contains multiple copies of three enzymatic components: pyruvate dehydrogenase (E1), dihydrolipoamide acetyltransferase (E2) and lipoamide dehydrogenase (E3). The protein is Dihydrolipoyllysine-residue acetyltransferase component of pyruvate dehydrogenase complex, mitochondrial (mrp-3) of Neurospora crassa (strain ATCC 24698 / 74-OR23-1A / CBS 708.71 / DSM 1257 / FGSC 987).